A 182-amino-acid polypeptide reads, in one-letter code: Inner membrane-spanning protein YciB (182 aa).

Transmembrane regions (helical) follow at residues 22-42, 53-73, 76-96, 121-141, and 149-169; these read IYAA…VVWV, ITLV…NEAF, WKVT…QFLF, FSWG…AFYL, and FKVF…GIYI.

This sequence belongs to the YciB family.

Its subcellular location is the cell inner membrane. Its function is as follows. Plays a role in cell envelope biogenesis, maintenance of cell envelope integrity and membrane homeostasis. The chain is Inner membrane-spanning protein YciB from Tolumonas auensis (strain DSM 9187 / NBRC 110442 / TA 4).